The sequence spans 240 residues: MTGPGLRLLAGMGLAGALVLGLSLWLHFDPDQHLPIGSIQITGEPRHADTDAILERVRAHAPGFVGTDLEVLREELQAMPWVDAVQLRRRWPDTLEVHVTEPVPVAQWGDDHLVDRHGRLFGPVDLAEWDFLPALAGEDGRQVVLMHRYLEVSARLADAGFEVVGVHEGKRHDWTIHLADGAEVLMGRDVNLNRLGQLVRAAPALRAREDAPIARVDLRYPHGLAVAWAEEADNDGGNAR.

At 1 to 7 the chain is on the cytoplasmic side; sequence MTGPGLR. The helical transmembrane segment at 8–28 threads the bilayer; that stretch reads LLAGMGLAGALVLGLSLWLHF. At 29–240 the chain is on the periplasmic side; the sequence is DPDQHLPIGS…EADNDGGNAR (212 aa). A POTRA domain is found at 34–102; the sequence is LPIGSIQITG…DTLEVHVTEP (69 aa).

The protein belongs to the FtsQ/DivIB family. FtsQ subfamily. As to quaternary structure, part of a complex composed of FtsB, FtsL and FtsQ.

The protein localises to the cell inner membrane. In terms of biological role, essential cell division protein. May link together the upstream cell division proteins, which are predominantly cytoplasmic, with the downstream cell division proteins, which are predominantly periplasmic. May control correct divisome assembly. This chain is Cell division protein FtsQ, found in Thioalkalivibrio sp. (strain K90mix).